The following is a 146-amino-acid chain: Putative pre-16S rRNA nuclease (146 aa).

It belongs to the YqgF nuclease family.

It is found in the cytoplasm. Functionally, could be a nuclease involved in processing of the 5'-end of pre-16S rRNA. The chain is Putative pre-16S rRNA nuclease from Dechloromonas aromatica (strain RCB).